A 358-amino-acid polypeptide reads, in one-letter code: 4-hydroxy-3-methylbut-2-en-1-yl diphosphate synthase (flavodoxin) (358 aa).

[4Fe-4S] cluster is bound by residues Cys270, Cys273, Cys305, and Glu312.

It belongs to the IspG family. Requires [4Fe-4S] cluster as cofactor.

It carries out the reaction (2E)-4-hydroxy-3-methylbut-2-enyl diphosphate + oxidized [flavodoxin] + H2O + 2 H(+) = 2-C-methyl-D-erythritol 2,4-cyclic diphosphate + reduced [flavodoxin]. It participates in isoprenoid biosynthesis; isopentenyl diphosphate biosynthesis via DXP pathway; isopentenyl diphosphate from 1-deoxy-D-xylulose 5-phosphate: step 5/6. Converts 2C-methyl-D-erythritol 2,4-cyclodiphosphate (ME-2,4cPP) into 1-hydroxy-2-methyl-2-(E)-butenyl 4-diphosphate. The sequence is that of 4-hydroxy-3-methylbut-2-en-1-yl diphosphate synthase (flavodoxin) from Ruthia magnifica subsp. Calyptogena magnifica.